Here is a 261-residue protein sequence, read N- to C-terminus: Ribosome biogenesis protein NSA2 (261 aa).

The segment covering Met1–Ser36 has biased composition (basic and acidic residues). Residues Met1 to Pro87 form a disordered region. 2 short sequence motifs (nuclear localization signal) span residues Gly15–Glu22 and His51–Lys58. Over residues Leu45–Ile65 the composition is skewed to basic residues.

This sequence belongs to the eukaryotic ribosomal protein eS8 family. Ribosome biogenesis protein NSA2 subfamily. As to quaternary structure, component of the pre-66S ribosomal particle. Interacts with NOP7 and RRP1. Interacts with RSA4 (via WD repeats).

It is found in the nucleus. Its subcellular location is the nucleolus. In terms of biological role, involved in the biogenesis of the 60S ribosomal subunit. May play a part in the quality control of pre-60S particles. The chain is Ribosome biogenesis protein NSA2 (NSA2) from Coccidioides immitis (strain RS) (Valley fever fungus).